The sequence spans 259 residues: Protein unc-50 homolog (259 aa).

Position 1 is an N-acetylmethionine (M1). Residues 1-82 (MLPSTSLNSS…TKDQWARDDP (82 aa)) lie on the Cytoplasmic side of the membrane. S6 bears the Phosphoserine mark. The chain crosses the membrane as a helical span at residues 83-103 (AFLVLLSIWLCVSTIGFGFVL). Residues 104-115 (DMGFFETIKLLL) are Lumenal-facing. Residues 116-136 (WVVFIDCVGVGLLISTLMWFI) traverse the membrane as a helical segment. Over 137–163 (SNKYLVKRQSRDYDVEWGYAFDVHLNA) the chain is Cytoplasmic. The chain crosses the membrane as a helical span at residues 164-184 (FYPLLVILHFIQLFFINHVIL). The Lumenal portion of the chain corresponds to 185–187 (TDT). A helical membrane pass occupies residues 188-208 (FIGYLVGNTLWLIAVGYYIYV). Residues 209-222 (TFLGYSALPFLKNT) are Cytoplasmic-facing. A helical membrane pass occupies residues 223–243 (VVLLYPFAPLIVLYGLSLALG). Residues 244 to 259 (WNFTHTLCSFYKYRVK) are Lumenal-facing.

Belongs to the unc-50 family. Expressed in brain, kidney and testis, and at lower levels in heart.

Its subcellular location is the nucleus inner membrane. The protein resides in the golgi apparatus membrane. Functionally, involved in the cell surface expression of neuronal nicotinic receptors. Binds RNA. This chain is Protein unc-50 homolog (Unc50), found in Rattus norvegicus (Rat).